Reading from the N-terminus, the 591-residue chain is MALAISSEDTQVLLKDKNVLHESNVDKYRTAGQITQTALRFLAGLINDSYHHRTRATPLSVAELCMLTDSFVERCVRQAFANKANERGIAHPTTIDVDEITQGWAPETDDAANMERWNRDRQANSGSCQGARSAISGFLHEGDVVKLTVGCHIDGYTAQVSHTMVVYPTTRREADQALVPAGPLLGAKADAVAAATIAKESVTSLLACAQATEKLPAAFGERQVTGTLIRRVVDAVARSYNCAVVPGSRVRRVRRFLAGQNEGVVAERDIKGVHWTEAHQEAALLASSVETTDVTRVDASNKSANDSAVATDDFVVVSGEAYLIDLKIAPLKDLPRGLLTLQTVDHFSGKSHRKDELLARASLICRDFAKQHVLKLKSSRQLLHKLDSKGVYPTKLAHLTAAFPLDPESPDWDAVSKELKHLRLGLAEVTNNYLANEKPVQLCRLVPWDVILKAVNPTGKHGTDASNPTLPGYEIPLPQLGISSLRLKSLLKDSLPVPVARESITVLLCPAEVTSTGSPELLKLTGGPTTTPSWIHSDYELNVSDPVVQGILQLAELSKDKRFGLAIRETQPWKQKIPSAAAVTSADVEMA.

The protein belongs to the peptidase M24 family. Component of the nucleoplasmic and cytoplasmic pre-60S ribosomal particles.

The protein resides in the cytoplasm. Its subcellular location is the nucleus. In terms of biological role, probable metalloprotease involved in proper assembly of pre-ribosomal particles during the biogenesis of the 60S ribosomal subunit. Accompanies the pre-60S particles to the cytoplasm. This Eremothecium gossypii (strain ATCC 10895 / CBS 109.51 / FGSC 9923 / NRRL Y-1056) (Yeast) protein is Probable metalloprotease ARX1 (ARX1).